The chain runs to 172 residues: MVSNWNRNGMKRRRTPRRGYGRPYKPVVPITRVVVHQSALLKKDEVVGCEIKPDGDVARYKMRKVMLTCTLRMPPGELVNYIIVKSSSPIANWAAAFTAPALLVKESCQDMISIIAKGKVESNGVAGTDCTKSFNKFIRLGAGISQTQHLYVVMYTSVALKVVLEHRVYIEL.

The tract at residues 1–23 (MVSNWNRNGMKRRRTPRRGYGRP) is disordered. Positions 9–20 (GMKRRRTPRRGY) are enriched in basic residues.

Belongs to the nanoviridae capsid protein family.

The protein resides in the virion. The protein is Capsid protein (DNA-S) of Milk vetch dwarf virus (isolate 9) (MDV).